The primary structure comprises 665 residues: Probable potassium transport system protein Kup 2 (665 aa).

Transmembrane regions (helical) follow at residues 13–33, 55–75, 98–118, 138–158, 167–187, 195–215, 217–237, 250–270, 295–315, 344–364, 375–395, 400–420, and 428–448; these read GLLV…LYVM, ISLI…LIAL, WLVL…TLTP, IPVP…LFLF, IIGK…GLTG, LSLL…SPAN, VGVL…ALYS, SWPY…VWIL, FFAI…LITG, IFIP…VFLF, GLAI…YLSL, ILLR…FLIS, and GGYV…IWYF.

This sequence belongs to the HAK/KUP transporter (TC 2.A.72) family.

It is found in the cell membrane. The catalysed reaction is K(+)(in) + H(+)(in) = K(+)(out) + H(+)(out). In terms of biological role, transport of potassium into the cell. Likely operates as a K(+):H(+) symporter. The chain is Probable potassium transport system protein Kup 2 from Lactobacillus johnsonii (strain CNCM I-12250 / La1 / NCC 533).